The sequence spans 137 residues: 6,7-dimethyl-8-ribityllumazine synthase (137 aa).

5-amino-6-(D-ribitylamino)uracil is bound by residues phenylalanine 11, 43 to 45 (SFD), and 67 to 69 (CVI). Residue 72 to 73 (DT) participates in (2S)-2-hydroxy-3-oxobutyl phosphate binding. The active-site Proton donor is histidine 75. Residue leucine 100 coordinates 5-amino-6-(D-ribitylamino)uracil. Arginine 115 contributes to the (2S)-2-hydroxy-3-oxobutyl phosphate binding site.

Belongs to the DMRL synthase family. In terms of assembly, forms an icosahedral capsid composed of 60 subunits, arranged as a dodecamer of pentamers.

It carries out the reaction (2S)-2-hydroxy-3-oxobutyl phosphate + 5-amino-6-(D-ribitylamino)uracil = 6,7-dimethyl-8-(1-D-ribityl)lumazine + phosphate + 2 H2O + H(+). The protein operates within cofactor biosynthesis; riboflavin biosynthesis; riboflavin from 2-hydroxy-3-oxobutyl phosphate and 5-amino-6-(D-ribitylamino)uracil: step 1/2. In terms of biological role, catalyzes the formation of 6,7-dimethyl-8-ribityllumazine by condensation of 5-amino-6-(D-ribitylamino)uracil with 3,4-dihydroxy-2-butanone 4-phosphate. This is the penultimate step in the biosynthesis of riboflavin. In Methanococcus maripaludis (strain C5 / ATCC BAA-1333), this protein is 6,7-dimethyl-8-ribityllumazine synthase.